A 295-amino-acid polypeptide reads, in one-letter code: Ribosomal RNA small subunit methyltransferase A (295 aa).

S-adenosyl-L-methionine contacts are provided by N29, L31, G56, E77, D102, and N128.

The protein belongs to the class I-like SAM-binding methyltransferase superfamily. rRNA adenine N(6)-methyltransferase family. RsmA subfamily.

Its subcellular location is the cytoplasm. The enzyme catalyses adenosine(1518)/adenosine(1519) in 16S rRNA + 4 S-adenosyl-L-methionine = N(6)-dimethyladenosine(1518)/N(6)-dimethyladenosine(1519) in 16S rRNA + 4 S-adenosyl-L-homocysteine + 4 H(+). Specifically dimethylates two adjacent adenosines (A1518 and A1519) in the loop of a conserved hairpin near the 3'-end of 16S rRNA in the 30S particle. May play a critical role in biogenesis of 30S subunits. This is Ribosomal RNA small subunit methyltransferase A from Listeria monocytogenes serovar 1/2a (strain ATCC BAA-679 / EGD-e).